The sequence spans 96 residues: Phosphoribosyl-ATP pyrophosphatase (96 aa).

It belongs to the PRA-PH family.

The protein resides in the cytoplasm. The catalysed reaction is 1-(5-phospho-beta-D-ribosyl)-ATP + H2O = 1-(5-phospho-beta-D-ribosyl)-5'-AMP + diphosphate + H(+). Its pathway is amino-acid biosynthesis; L-histidine biosynthesis; L-histidine from 5-phospho-alpha-D-ribose 1-diphosphate: step 2/9. This Methanobrevibacter smithii (strain ATCC 35061 / DSM 861 / OCM 144 / PS) protein is Phosphoribosyl-ATP pyrophosphatase.